A 357-amino-acid chain; its full sequence is Phosphoribosylformylglycinamidine cyclo-ligase (357 aa).

This sequence belongs to the AIR synthase family.

The protein resides in the cytoplasm. The enzyme catalyses 2-formamido-N(1)-(5-O-phospho-beta-D-ribosyl)acetamidine + ATP = 5-amino-1-(5-phospho-beta-D-ribosyl)imidazole + ADP + phosphate + H(+). Its pathway is purine metabolism; IMP biosynthesis via de novo pathway; 5-amino-1-(5-phospho-D-ribosyl)imidazole from N(2)-formyl-N(1)-(5-phospho-D-ribosyl)glycinamide: step 2/2. The protein is Phosphoribosylformylglycinamidine cyclo-ligase of Rhizobium etli (strain CIAT 652).